The sequence spans 103 residues: Carboxysome shell protein CcmK3 (103 aa).

The 88-residue stretch at 4 to 91 folds into the BMC domain; the sequence is AVGVIQTLGF…PPENVLAVLP (88 aa).

It belongs to the bacterial microcompartments protein family. CcmK subfamily. In terms of assembly, forms mixed heterohexamers with CcmK4, probably with 1:5 CcmK3:CcmK4 stoichiometry. Only very weak interactions with CcmK1 and CcmK2 were seen. Bulky residues in the pore region probably preclude the formation of homohexamers by this subunit.

The protein resides in the carboxysome. In terms of biological role, a probably minor shell protein component of the carboxysome, a polyhedral inclusion where RuBisCO (ribulose bisphosphate carboxylase, rbcL-rbcS) is sequestered. This subunit probably does not form homohexamers. In Synechocystis sp. (strain ATCC 27184 / PCC 6803 / Kazusa), this protein is Carboxysome shell protein CcmK3.